The chain runs to 305 residues: Lipoyl synthase (305 aa).

The [4Fe-4S] cluster site is built by Cys-41, Cys-46, Cys-52, Cys-68, Cys-72, Cys-75, and Ser-281. The 217-residue stretch at 54–270 (GARRTATFMI…RKVAMDKGFK (217 aa)) folds into the Radical SAM core domain. The segment covering 283 to 298 (HADEQVNEAAKEKQRQ) has biased composition (basic and acidic residues). The tract at residues 283-305 (HADEQVNEAAKEKQRQGEAQLNS) is disordered.

It belongs to the radical SAM superfamily. Lipoyl synthase family. The cofactor is [4Fe-4S] cluster.

The protein localises to the cytoplasm. The enzyme catalyses [[Fe-S] cluster scaffold protein carrying a second [4Fe-4S](2+) cluster] + N(6)-octanoyl-L-lysyl-[protein] + 2 oxidized [2Fe-2S]-[ferredoxin] + 2 S-adenosyl-L-methionine + 4 H(+) = [[Fe-S] cluster scaffold protein] + N(6)-[(R)-dihydrolipoyl]-L-lysyl-[protein] + 4 Fe(3+) + 2 hydrogen sulfide + 2 5'-deoxyadenosine + 2 L-methionine + 2 reduced [2Fe-2S]-[ferredoxin]. Its pathway is protein modification; protein lipoylation via endogenous pathway; protein N(6)-(lipoyl)lysine from octanoyl-[acyl-carrier-protein]. Functionally, catalyzes the radical-mediated insertion of two sulfur atoms into the C-6 and C-8 positions of the octanoyl moiety bound to the lipoyl domains of lipoate-dependent enzymes, thereby converting the octanoylated domains into lipoylated derivatives. This chain is Lipoyl synthase, found in Staphylococcus aureus (strain Mu3 / ATCC 700698).